We begin with the raw amino-acid sequence, 332 residues long: Phosphoenolpyruvate transferase (332 aa).

7,8-didemethyl-8-hydroxy-5-deazariboflavin is bound at residue D63.

It belongs to the CofD family. As to quaternary structure, homodimer. Mg(2+) is required as a cofactor.

The enzyme catalyses enolpyruvoyl-2-diphospho-5'-guanosine + 7,8-didemethyl-8-hydroxy-5-deazariboflavin = dehydro coenzyme F420-0 + GMP + H(+). It participates in cofactor biosynthesis; coenzyme F420 biosynthesis. Its function is as follows. Catalyzes the transfer of the phosphoenolpyruvate moiety from enoylpyruvoyl-2-diphospho-5'-guanosine (EPPG) to 7,8-didemethyl-8-hydroxy-5-deazariboflavin (FO) with the formation of dehydro coenzyme F420-0 and GMP. This chain is Phosphoenolpyruvate transferase, found in Nocardia farcinica (strain IFM 10152).